Here is a 197-residue protein sequence, read N- to C-terminus: Peptide deformylase (197 aa).

Positions 106 and 148 each coordinate Fe cation. Glu-149 is an active-site residue. His-152 contributes to the Fe cation binding site.

It belongs to the polypeptide deformylase family. Fe(2+) serves as cofactor.

It catalyses the reaction N-terminal N-formyl-L-methionyl-[peptide] + H2O = N-terminal L-methionyl-[peptide] + formate. Removes the formyl group from the N-terminal Met of newly synthesized proteins. Requires at least a dipeptide for an efficient rate of reaction. N-terminal L-methionine is a prerequisite for activity but the enzyme has broad specificity at other positions. This Mycobacterium marinum (strain ATCC BAA-535 / M) protein is Peptide deformylase.